A 295-amino-acid chain; its full sequence is Bifunctional protein FolD (295 aa).

NADP(+) contacts are provided by residues 167-169 (GRS), serine 192, and isoleucine 233.

This sequence belongs to the tetrahydrofolate dehydrogenase/cyclohydrolase family. As to quaternary structure, homodimer.

It catalyses the reaction (6R)-5,10-methylene-5,6,7,8-tetrahydrofolate + NADP(+) = (6R)-5,10-methenyltetrahydrofolate + NADPH. The enzyme catalyses (6R)-5,10-methenyltetrahydrofolate + H2O = (6R)-10-formyltetrahydrofolate + H(+). It functions in the pathway one-carbon metabolism; tetrahydrofolate interconversion. In terms of biological role, catalyzes the oxidation of 5,10-methylenetetrahydrofolate to 5,10-methenyltetrahydrofolate and then the hydrolysis of 5,10-methenyltetrahydrofolate to 10-formyltetrahydrofolate. The protein is Bifunctional protein FolD of Paramagnetospirillum magneticum (strain ATCC 700264 / AMB-1) (Magnetospirillum magneticum).